Consider the following 716-residue polypeptide: Pyruvate/proton symporter BtsT (716 aa).

Residues 1–5 are Cytoplasmic-facing; the sequence is MDTKK. The helical transmembrane segment at 6–26 threads the bilayer; the sequence is IFKHIPWVILGIIGAFCLAVV. Over 27–30 the chain is Periplasmic; the sequence is ALRR. Residues 31–51 traverse the membrane as a helical segment; sequence GEHISALWIVVASVSVYLVAY. Topologically, residues 52 to 88 are cytoplasmic; the sequence is RYYSLYIAQKVMKLDPTRATPAVINNDGLNYVPTNRY. Residues 89–109 form a helical membrane-spanning segment; sequence VLFGHHFAAIAGAGPLVGPVL. Topologically, residues 110–119 are periplasmic; it reads AAQMGYLPGT. The helical transmembrane segment at 120-140 threads the bilayer; it reads LWLLAGVVLAGAVQDFMVLFI. Residues 141 to 163 are Cytoplasmic-facing; the sequence is SSRRNGASLGEMIKEEMGPVPGT. The chain crosses the membrane as a helical span at residues 164 to 184; sequence IALFGCFLIMIIILAVLALIV. At 185-191 the chain is on the periplasmic side; the sequence is VKALAES. A helical transmembrane segment spans residues 192 to 212; sequence PWGVFTVCSTVPIALFMGIYM. The Cytoplasmic segment spans residues 213-222; that stretch reads RFIRPGRVGE. The helical transmembrane segment at 223-243 threads the bilayer; the sequence is VSVIGIVLLVASIYFGGVIAH. Residues 244–257 lie on the Periplasmic side of the membrane; the sequence is DPYWGPALTFKDTT. A helical membrane pass occupies residues 258-278; that stretch reads ITFALIGYAFVSALLPVWLIL. Residues 279–282 lie on the Cytoplasmic side of the membrane; sequence APRD. Residues 283–303 traverse the membrane as a helical segment; the sequence is YLATFLKIGVIVGLALGIVVL. The Periplasmic segment spans residues 304-326; sequence NPELKMPAMTQYIDGTGPLWKGA. Residues 327–347 traverse the membrane as a helical segment; the sequence is LFPFLFITIACGAVSGFHALI. The Cytoplasmic portion of the chain corresponds to 348–374; that stretch reads SSGTTPKLLANETDARFIGYGAMLMES. The chain crosses the membrane as a helical span at residues 375–395; that stretch reads FVAIMALVAASIIEPGLYFAM. At 396–484 the chain is on the periplasmic side; it reads NTPPAGLGIT…HVFHKVLPMA (89 aa). A helical membrane pass occupies residues 485 to 505; it reads DMGFWYHFGILFEALFILTAL. The Cytoplasmic segment spans residues 506 to 531; that stretch reads DAGTRSGRFMLQDLLGNFIPFLKKTD. The helical transmembrane segment at 532-552 threads the bilayer; it reads SLVAGIIGTAGCVGLWGYLLY. Residues 553–568 are Periplasmic-facing; that stretch reads QGVVDPLGGVKSLWPL. Residues 569–589 traverse the membrane as a helical segment; sequence FGISNQMLAAVALVLGTVVLI. Residues 590–596 are Cytoplasmic-facing; it reads KMKRTQY. A helical membrane pass occupies residues 597 to 617; it reads IWVTVVPAVWLLICTTWALGL. The Periplasmic portion of the chain corresponds to 618–668; sequence KLFSTNPQMEGFFYMASQYKEKIANGTDLTAQQIANMNHIVVNNYTNAGLS. A helical transmembrane segment spans residues 669–689; the sequence is ILFLIVVYSIIFYGFKTWLAV. The Cytoplasmic segment spans residues 690-716; it reads RNSDKRTDKETPYVPIPEGGVKISSHH. Positions 696–716 are disordered; sequence TDKETPYVPIPEGGVKISSHH.

The protein belongs to the peptide transporter carbon starvation (CstA) (TC 2.A.114) family. Interacts with BtsS and YpdA.

Its subcellular location is the cell inner membrane. The catalysed reaction is pyruvate(out) + H(+)(out) = pyruvate(in) + H(+)(in). Its activity is regulated as follows. Transport is inhibited by the protonophores 2,4-dinitrophenol (DNP) and carbonyl cyanide m-chlorophenyl hydrazone (CCCP), but not by ionophores such as valinomycin, nonactin and nigericin. Functionally, transports pyruvate with a high affinity and specificity. The process is driven by the proton motive force. Under nutrient limiting conditions, mediates the uptake of pyruvate, thus enabling it to be used as a carbon source for the growth and survival. Part of a nutrient-sensing regulatory network composed of the two-component regulatory systems BtsS/BtsR and YpdA/YpdB, and their respective target proteins, BtsT and YhjX. The sequence is that of Pyruvate/proton symporter BtsT from Escherichia coli (strain K12).